Here is a 269-residue protein sequence, read N- to C-terminus: MLRTPKAASDPMTLTQQEMRELPLFRRLRHAVGKAVADFAMIREGDRIAVGVSGGKDSYTLLLLLEELRRRAPIDFQLVAVIIDSGYPGYRGDIVRDYVTSLGIPCHLETTTHYEIITEKRRPGSSYCSICARLKRGALYGLADSLGCNKLALGHHGDDFIETLLLNQFFVGSLKAMSANMLADNGRTTVIRPLVYASEEEIVDFMGQVGLPVVSCNCPVSDSTDLKRRRMKELLKELEQEIPHIRSSMLKALSNVHPRHLLDQQLQGL.

Positions 53–58 (SGGKDS) match the PP-loop motif motif. Positions 128, 131, and 218 each coordinate [4Fe-4S] cluster.

It belongs to the TtcA family. As to quaternary structure, homodimer. The cofactor is Mg(2+). Requires [4Fe-4S] cluster as cofactor.

The protein resides in the cytoplasm. It catalyses the reaction cytidine(32) in tRNA + S-sulfanyl-L-cysteinyl-[cysteine desulfurase] + AH2 + ATP = 2-thiocytidine(32) in tRNA + L-cysteinyl-[cysteine desulfurase] + A + AMP + diphosphate + H(+). Its pathway is tRNA modification. Its function is as follows. Catalyzes the ATP-dependent 2-thiolation of cytidine in position 32 of tRNA, to form 2-thiocytidine (s(2)C32). The sulfur atoms are provided by the cysteine/cysteine desulfurase (IscS) system. The chain is tRNA-cytidine(32) 2-sulfurtransferase from Pelobacter propionicus (strain DSM 2379 / NBRC 103807 / OttBd1).